Here is a 224-residue protein sequence, read N- to C-terminus: Cytidylate kinase (224 aa).

Position 9-17 (9-17 (GPSGSGKGT)) interacts with ATP.

It belongs to the cytidylate kinase family. Type 1 subfamily.

The protein resides in the cytoplasm. It catalyses the reaction CMP + ATP = CDP + ADP. The enzyme catalyses dCMP + ATP = dCDP + ADP. This is Cytidylate kinase from Saccharophagus degradans (strain 2-40 / ATCC 43961 / DSM 17024).